The following is an 83-amino-acid chain: Small ribosomal subunit protein uS17 (83 aa).

It belongs to the universal ribosomal protein uS17 family. As to quaternary structure, part of the 30S ribosomal subunit.

In terms of biological role, one of the primary rRNA binding proteins, it binds specifically to the 5'-end of 16S ribosomal RNA. In Campylobacter hominis (strain ATCC BAA-381 / DSM 21671 / CCUG 45161 / LMG 19568 / NCTC 13146 / CH001A), this protein is Small ribosomal subunit protein uS17.